Consider the following 83-residue polypeptide: Small ribosomal subunit protein bS16 (83 aa).

This sequence belongs to the bacterial ribosomal protein bS16 family.

The polypeptide is Small ribosomal subunit protein bS16 (Stutzerimonas stutzeri (strain A1501) (Pseudomonas stutzeri)).